A 921-amino-acid chain; its full sequence is Protein translocase subunit SecA (921 aa).

ATP-binding positions include Gln87, 105–109 (GEGKT), and Asp516. Residues Cys905, Cys907, Cys916, and His917 each coordinate Zn(2+).

This sequence belongs to the SecA family. In terms of assembly, monomer and homodimer. Part of the essential Sec protein translocation apparatus which comprises SecA, SecYEG and auxiliary proteins SecDF-YajC and YidC. It depends on Zn(2+) as a cofactor.

It is found in the cell inner membrane. The protein localises to the cytoplasm. It carries out the reaction ATP + H2O + cellular proteinSide 1 = ADP + phosphate + cellular proteinSide 2.. In terms of biological role, part of the Sec protein translocase complex. Interacts with the SecYEG preprotein conducting channel. Has a central role in coupling the hydrolysis of ATP to the transfer of proteins into and across the cell membrane, serving both as a receptor for the preprotein-SecB complex and as an ATP-driven molecular motor driving the stepwise translocation of polypeptide chains across the membrane. The sequence is that of Protein translocase subunit SecA from Albidiferax ferrireducens (strain ATCC BAA-621 / DSM 15236 / T118) (Rhodoferax ferrireducens).